The sequence spans 522 residues: Leucine-rich repeat transmembrane neuronal protein 1 (522 aa).

The N-terminal stretch at 1 to 34 (MDFLLLGLCLHWLLRRPSGVVLCLLGACFQMLPA) is a signal peptide. The region spanning 35 to 63 (APSGCPGQCRCEGRLLYCEALNLTEAPHN) is the LRRNT domain. The Extracellular portion of the chain corresponds to 35–427 (APSGCPGQCR…HAENAVQIHK (393 aa)). N56 and N63 each carry an N-linked (GlcNAc...) asparagine glycan. LRR repeat units lie at residues 64 to 87 (LSGL…QFTG), 89 to 111 (MQLT…AFQK), 112 to 135 (LRRV…TFRP), 136 to 159 (MPNL…LFHG), 161 to 183 (RKLT…IFQD), 184 to 207 (CRSL…SFAG), 209 to 231 (FKLT…HFPR), 233 to 255 (ISLH…LDWV), 256 to 278 (WNLE…VFET), and 280 to 302 (PYLQ…ILNS). N130 is a glycosylation site (N-linked (GlcNAc...) asparagine). In terms of domain architecture, LRRCT spans 314 to 365 (NLWDCGRNVCALASWLSNFQGRYDANLQCASPEYAQGEDVLDAVYAFHLCED). Residue N381 is glycosylated (N-linked (GlcNAc...) asparagine). Residues 428-448 (VVTGTMALIFSFLIVVLVLYV) traverse the membrane as a helical segment. Over 449–522 (SWKCFPASLR…HQQPARECEV (74 aa)) the chain is Cytoplasmic.

It belongs to the LRRTM family. As to expression, expressed predominantly in the nervous system by postmitotic neurons, but also in some non-neuronal tissues. In adult brain expression is most prominent in the forebraain, particularly in the thalamus and in the cortical areas including hippocampus, piriform and posterior cingulate.

It localises to the cell membrane. The protein resides in the postsynaptic cell membrane. Exhibits strong synaptogenic activity, restricted to excitatory presynaptic differentiation, acting at both pre- and postsynaptic level. This Mus musculus (Mouse) protein is Leucine-rich repeat transmembrane neuronal protein 1 (Lrrtm1).